The sequence spans 552 residues: Scavenger receptor class B member 1 (552 aa).

Residues 1-11 (MGCSAKARWAA) lie on the Cytoplasmic side of the membrane. The helical transmembrane segment at 12–32 (GALGVAGLLCAVLGAVMIVMV) threads the bilayer. Residues 33–443 (PSLIKQQVLK…LVLMPKVMHY (411 aa)) are Extracellular-facing. N-linked (GlcNAc...) asparagine glycans are attached at residues Asn102, Asn108, Asn173, Asn212, Asn227, Asn255, Asn310, Asn330, and Asn383. The cysteines at positions 251 and 384 are disulfide-linked. Phosphoserine occurs at positions 393 and 458. Residues 444-464 (AQYVLLALGCVLLLVPVICQI) form a helical membrane-spanning segment. A lipid anchor (S-palmitoyl cysteine) is attached at Cys462. The Cytoplasmic segment spans residues 465–552 (RSQVGAGQRA…GPSLGGGTGS (88 aa)). Thr493 is modified (phosphoserine).

This sequence belongs to the CD36 family. In terms of assembly, the C-terminal region binds to PDZK1. As to quaternary structure, (Microbial infection) Interacts with hepatitis C virus E1:E2 glycoproteins. In terms of processing, N-glycosylated. Post-translationally, the six cysteines of the extracellular domain are all involved in intramolecular disulfide bonds. In terms of tissue distribution, widely expressed.

The protein resides in the cell membrane. It is found in the membrane. Its subcellular location is the caveola. Functionally, receptor for different ligands such as phospholipids, cholesterol ester, lipoproteins, phosphatidylserine and apoptotic cells. Receptor for HDL, mediating selective uptake of cholesteryl ether and HDL-dependent cholesterol efflux. Also facilitates the flux of free and esterified cholesterol between the cell surface and apoB-containing lipoproteins and modified lipoproteins, although less efficiently than HDL. May be involved in the phagocytosis of apoptotic cells, via its phosphatidylserine binding activity. Its function is as follows. (Microbial infection) Acts as a receptor for hepatitis C virus in hepatocytes and appears to facilitate its cell entry. Binding between SCARB1 and the hepatitis C virus glycoprotein E2 is independent of the genotype of the viral isolate. (Microbial infection) Mediates uptake of M.fortuitum, E.coli and S.aureus. In terms of biological role, (Microbial infection) Facilitates the entry of human coronavirus SARS-CoV-2 by acting as an entry cofactor through HDL binding. In Homo sapiens (Human), this protein is Scavenger receptor class B member 1 (SCARB1).